The chain runs to 592 residues: E3 ubiquitin-protein ligase RNF180 (592 aa).

Over 1 to 564 (MKRSEESTST…DSRGWWFDMD (564 aa)) the chain is Cytoplasmic. Ser-231 bears the Phosphoserine mark. The segment at 282 to 489 (QSPPSFDPNM…VFLQTELNNA (208 aa)) is interaction with ZIC2. An RING-type zinc finger spans residues 432–474 (CAVCLDVYFNPYMCYPCHHIFCEPCLRTLAKDNPASTPCPLCR). Residues 565–585 (MVIIYIYSVNWVIGFVVFCFL) traverse the membrane as a helical segment. At 586–592 (CYFFFPF) the chain is on the extracellular side.

Interacts with ZIC2. In terms of tissue distribution, brain, kidney, testis and uterus. membrane protein. Nucleus envelope.

It is found in the endoplasmic reticulum membrane. The protein resides in the nucleus envelope. It carries out the reaction S-ubiquitinyl-[E2 ubiquitin-conjugating enzyme]-L-cysteine + [acceptor protein]-L-lysine = [E2 ubiquitin-conjugating enzyme]-L-cysteine + N(6)-ubiquitinyl-[acceptor protein]-L-lysine.. Its pathway is protein modification; protein ubiquitination. Its function is as follows. E3 ubiquitin-protein ligase which promotes polyubiquitination and degradation by the proteasome pathway of ZIC2. This is E3 ubiquitin-protein ligase RNF180 (Rnf180) from Mus musculus (Mouse).